Reading from the N-terminus, the 113-residue chain is Cell cycle protein GpsB (113 aa).

Residues 36 to 68 adopt a coiled-coil conformation; that stretch reads LDMVIKDYSTFTQEIEALQAENIRLVQELDNAP.

It belongs to the GpsB family. Forms polymers through the coiled coil domains. Interacts with PBP1, MreC and EzrA.

Its subcellular location is the cytoplasm. Functionally, divisome component that associates with the complex late in its assembly, after the Z-ring is formed, and is dependent on DivIC and PBP2B for its recruitment to the divisome. Together with EzrA, is a key component of the system that regulates PBP1 localization during cell cycle progression. Its main role could be the removal of PBP1 from the cell pole after pole maturation is completed. Also contributes to the recruitment of PBP1 to the division complex. Not essential for septum formation. This is Cell cycle protein GpsB from Listeria welshimeri serovar 6b (strain ATCC 35897 / DSM 20650 / CCUG 15529 / CIP 8149 / NCTC 11857 / SLCC 5334 / V8).